We begin with the raw amino-acid sequence, 57 residues long: Large ribosomal subunit protein bL32 (57 aa).

A disordered region spans residues 1-25 (MATPSNKNSKSHKRNRRGHIGLNVP). Residues 9–19 (SKSHKRNRRGH) show a composition bias toward basic residues.

The protein belongs to the bacterial ribosomal protein bL32 family.

This Leuconostoc mesenteroides subsp. mesenteroides (strain ATCC 8293 / DSM 20343 / BCRC 11652 / CCM 1803 / JCM 6124 / NCDO 523 / NBRC 100496 / NCIMB 8023 / NCTC 12954 / NRRL B-1118 / 37Y) protein is Large ribosomal subunit protein bL32.